The sequence spans 649 residues: Acetyl-coenzyme A synthetase (649 aa).

CoA contacts are provided by residues 191 to 194 (RGGR), Thr-311, and Asn-335. Residues 387-389 (GEP), 411-416 (DTWWQT), Asp-500, and Arg-515 each bind ATP. Ser-523 lines the CoA pocket. Arg-526 provides a ligand contact to ATP. 3 residues coordinate Mg(2+): Val-537, Phe-539, and Ile-542. Arg-584 is a CoA binding site. An N6-acetyllysine modification is found at Lys-609.

It belongs to the ATP-dependent AMP-binding enzyme family. Mg(2+) serves as cofactor. In terms of processing, acetylated. Deacetylation by the SIR2-homolog deacetylase activates the enzyme.

The catalysed reaction is acetate + ATP + CoA = acetyl-CoA + AMP + diphosphate. Catalyzes the conversion of acetate into acetyl-CoA (AcCoA), an essential intermediate at the junction of anabolic and catabolic pathways. AcsA undergoes a two-step reaction. In the first half reaction, AcsA combines acetate with ATP to form acetyl-adenylate (AcAMP) intermediate. In the second half reaction, it can then transfer the acetyl group from AcAMP to the sulfhydryl group of CoA, forming the product AcCoA. This is Acetyl-coenzyme A synthetase from Vibrio cholerae serotype O1 (strain ATCC 39315 / El Tor Inaba N16961).